A 418-amino-acid polypeptide reads, in one-letter code: Mitochondrial outer membrane protein SLC25A46 (418 aa).

Phosphoserine occurs at positions 32 and 35. Thr-45 carries the post-translational modification Phosphothreonine. A disordered region spans residues 46 to 96 (PPDIPGSRNLHWGEKSPSYGVPSAPPTLEGSAEEPFPGGGEGPRPGPSSEQ). One copy of the Solcar 1 repeat lies at 96 to 187 (QLNRFAGFGI…GIISEFTPLP (92 aa)). 6 helical membrane passes run 103–123 (FGIG…CIVL), 167–187 (FIVQ…TPLP), 202–222 (HLLL…ASLI), 258–278 (LLPL…HYII), 314–334 (FPEL…LYPL), and 382–402 (VFGF…HATI). A Solcar 2 repeat occupies 311–413 (DAYFPELIAN…QITKMIYSTL (103 aa)).

Belongs to the mitochondrial carrier (TC 2.A.29) family. Associates with the mitochondrial contact site and cristae organizing system (MICOS) complex. May associate with the endoplasmic reticulum membrane protein complex (EMC).

It is found in the mitochondrion outer membrane. Its function is as follows. Transmembrane protein of the mitochondrial outer membrane that controls mitochondrial organization. May regulate the assembly of the MICOS (mitochondrial contact site and cristae organizing system) complex which is essential to the biogenesis and dynamics of mitochondrial cristae, the inwards folds of the inner mitochondrial membrane. Through its interaction with the EMC (endoplasmic reticulum membrane protein complex), could regulate mitochondrial lipid homeostasis and thereby mitochondrial fission. This chain is Mitochondrial outer membrane protein SLC25A46, found in Mus musculus (Mouse).